We begin with the raw amino-acid sequence, 611 residues long: Chaperone protein HtpG (611 aa).

An a; substrate-binding region spans residues M1–R326. The tract at residues E327–R536 is b. The segment at L537–G611 is c.

Belongs to the heat shock protein 90 family. As to quaternary structure, homodimer.

The protein resides in the cytoplasm. Functionally, molecular chaperone. Has ATPase activity. The protein is Chaperone protein HtpG of Methylobacterium nodulans (strain LMG 21967 / CNCM I-2342 / ORS 2060).